Consider the following 426-residue polypeptide: tRNA methyltransferase 10 homolog C (426 aa).

The N-terminal 41 residues, 1 to 41 (MPVLLKMSVSITFLRPFARVLVPFTLHRKRRVLYSTIMQRY), are a transit peptide targeting the mitochondrion. S86 carries the phosphoserine modification. Residues 138–166 (LYIKEKMKKARQIKKEMKKAEKEEPKKDQ) adopt a coiled-coil conformation. The 193-residue stretch at 193 to 385 (MGWKGAQAMQ…KFVPSRKHAG (193 aa)) folds into the SAM-dependent MTase TRM10-type domain.

This sequence belongs to the class IV-like SAM-binding methyltransferase superfamily. TRM10 family. Component of mitochondrial ribonuclease P, a complex composed of TRMT10C/MRPP1, HSD17B10/MRPP2 and PRORP/MRPP3. Interacts with HSD17B10/MRPP2; forming the MRPP1-MRPP2 subcomplex of the mitochondrial ribonuclease P complex. Interacts with GRSF1.

The protein resides in the mitochondrion matrix. It is found in the mitochondrion nucleoid. It catalyses the reaction adenosine(9) in tRNA + S-adenosyl-L-methionine = N(1)-methyladenosine(9) in tRNA + S-adenosyl-L-homocysteine + H(+). The catalysed reaction is guanosine(9) in tRNA + S-adenosyl-L-methionine = N(1)-methylguanosine(9) in tRNA + S-adenosyl-L-homocysteine + H(+). It carries out the reaction an adenosine in mRNA + S-adenosyl-L-methionine = an N(1)-methyladenosine in mRNA + S-adenosyl-L-homocysteine + H(+). Its function is as follows. Mitochondrial tRNA N(1)-methyltransferase involved in mitochondrial tRNA maturation. Component of mitochondrial ribonuclease P, a complex composed of TRMT10C/MRPP1, HSD17B10/MRPP2 and PRORP/MRPP3, which cleaves tRNA molecules in their 5'-ends. Together with HSD17B10/MRPP2, forms a subcomplex of the mitochondrial ribonuclease P, named MRPP1-MRPP2 subcomplex, which displays functions that are independent of the ribonuclease P activity. The MRPP1-MRPP2 subcomplex catalyzes the formation of N(1)-methylguanine and N(1)-methyladenine at position 9 (m1G9 and m1A9, respectively) in tRNAs; TRMT10C/MRPP1 acting as the catalytic N(1)-methyltransferase subunit. The MRPP1-MRPP2 subcomplex also acts as a tRNA maturation platform: following 5'-end cleavage by the mitochondrial ribonuclease P complex, the MRPP1-MRPP2 subcomplex enhances the efficiency of 3'-processing catalyzed by ELAC2, retains the tRNA product after ELAC2 processing and presents the nascent tRNA to the mitochondrial CCA tRNA nucleotidyltransferase TRNT1 enzyme. In addition to tRNA N(1)-methyltransferase activity, TRMT10C/MRPP1 also acts as a mRNA N(1)-methyltransferase by mediating methylation of adenosine residues at the N(1) position of MT-ND5 mRNA. Associates with mitochondrial DNA complexes at the nucleoids to initiate RNA processing and ribosome assembly. This chain is tRNA methyltransferase 10 homolog C, found in Bos taurus (Bovine).